The chain runs to 552 residues: Probable protein kinase UbiB (552 aa).

The 384-residue stretch at 121–504 folds into the Protein kinase domain; sequence HFDTVPLASA…QGLQRRVVNA (384 aa). ATP-binding positions include 127–135 and K149; that span reads LASASISQV. The Proton acceptor role is filled by D284. 2 consecutive transmembrane segments (helical) span residues 501 to 521 and 530 to 550; these read VVNA…YGLH and IPVW…SAWW.

This sequence belongs to the ABC1 family. UbiB subfamily.

Its subcellular location is the cell inner membrane. Its pathway is cofactor biosynthesis; ubiquinone biosynthesis [regulation]. Is probably a protein kinase regulator of UbiI activity which is involved in aerobic coenzyme Q (ubiquinone) biosynthesis. In Xylella fastidiosa (strain M12), this protein is Probable protein kinase UbiB.